Reading from the N-terminus, the 445-residue chain is tRNA modification GTPase MnmE (445 aa).

Positions 20, 79, and 119 each coordinate (6S)-5-formyl-5,6,7,8-tetrahydrofolate. The 157-residue stretch at 215-371 (GLKLAIIGPP…ILKNIEEIAE (157 aa)) folds into the TrmE-type G domain. A K(+)-binding site is contributed by Asn-225. GTP contacts are provided by residues 225-230 (NAGKSS), 244-250 (SNIAGTT), and 269-272 (DTAG). Ser-229 lines the Mg(2+) pocket. The K(+) site is built by Ser-244, Ile-246, and Thr-249. Residue Thr-250 participates in Mg(2+) binding. Lys-445 serves as a coordination point for (6S)-5-formyl-5,6,7,8-tetrahydrofolate.

The protein belongs to the TRAFAC class TrmE-Era-EngA-EngB-Septin-like GTPase superfamily. TrmE GTPase family. As to quaternary structure, homodimer. Heterotetramer of two MnmE and two MnmG subunits. K(+) is required as a cofactor.

It localises to the cytoplasm. In terms of biological role, exhibits a very high intrinsic GTPase hydrolysis rate. Involved in the addition of a carboxymethylaminomethyl (cmnm) group at the wobble position (U34) of certain tRNAs, forming tRNA-cmnm(5)s(2)U34. This Rickettsia bellii (strain OSU 85-389) protein is tRNA modification GTPase MnmE.